The primary structure comprises 441 residues: MPVAKDLFPEYGTLATGENEPSRNIRRAQKLREFQNLELPPYLAKQVAAKMAEKGLAVEATGGVAVQRIAGGSQSGQKALMGASSSALTKHTPSASQPTTHDSLTNLGANLTQSKPAWHAPWEIYRVITGHQGWVRSVCVEPENQWFATGSADKTIKIWDLATGKLRLTLTGHIMGVRALGVSPRHPYMFSGGEDKMVKCWDLETNKVVRHYHGHLSAVYSLDIHPTLDVLVSAGRDAVARVWDIRTRDPVVVLSGHKSTINRVKFQASEPQVITASADETVRLWNLQAGKTMTTLTHHKKSVRGLTLHPEEFTFSTASANSSKQWKCPEGDLVLNYDDQNAIINTLSVNQDNVMFSGGDNGSIGFYDWKTGHMFQSTQSIPIPGSIESENGIFDSSFDKTGLRLITCEADKSIKMWREKPNATAESDPGLEWKPKIYQTY.

Disordered stretches follow at residues 1–22 (MPVA…NEPS) and 81–107 (MGAS…LTNL). The span at 83–107 (ASSSALTKHTPSASQPTTHDSLTNL) shows a compositional bias: polar residues. WD repeat units lie at residues 130-169 (GHQG…LRLT), 172-211 (GHIM…VVRH), 214-253 (GHLS…PVVV), 256-295 (GHKS…TMTT), 298-336 (HHKK…LVLN), 339-379 (DQNA…QSTQ), and 388-427 (ESEN…TAES).

The protein belongs to the WD repeat PRL1/PRL2 family. Associated with the spliceosome.

Its subcellular location is the cytoplasm. It is found in the nucleus. In terms of biological role, involved in pre-mRNA splicing and required for cell cycle progression at G2/M. In Yarrowia lipolytica (strain CLIB 122 / E 150) (Yeast), this protein is Pre-mRNA-splicing factor PRP46 (PRP46).